The primary structure comprises 534 residues: MSKYIVVTGGVVSSIGKGITSASIGRILRSYGVNVTAIKIDPYLNWDSGTLNPYQHGEVYVTDDGMECDLDLGHYERFLDVELSGKANITTGKVYSSVIEKERKGEYLGSCVQIIPHITDEIKLMIRNVAEKTKAEVVMVEVGGTVGDIESQPFIEAVRQLKNEEGHDNCMFVHVTYVPYLKAAKEFKTKPTQHSTKELRGLGINPDMIVCRSELSLDANLKEKIAHFCDVPIEAVINTPDAHSIYEVPLIMYSANVGSYILNRLNIDTATNKADLYEWSQIVEDLKIETPKVKIAVVGKYIELEDAYISIRESLKHAGAANKVHVDIDWIKADNDFNIDILKQYDGLLIPGGFGERGINGKIEAVKYAIKNNVPIFGICLGLHAMSIAIAQLNGYPDANSTEFDENSTCPVIDMMEEQKKINNMGGTMRLGAYPCKIKEGTLAYEAYKDTNISERHRHRYEVNNEYRDILTSAGAIISGTSPDDFLVEMIELENHPWFLGCQFHPEFKSRPNKAHPLFKSFIKAAKNKKQNQK.

The interval 1-267 (MSKYIVVTGG…GSYILNRLNI (267 aa)) is amidoligase domain. Serine 13 provides a ligand contact to CTP. UTP is bound at residue serine 13. An ATP-binding site is contributed by 14–19 (SIGKGI). Tyrosine 54 serves as a coordination point for L-glutamine. Residue aspartate 71 coordinates ATP. Mg(2+) is bound by residues aspartate 71 and glutamate 141. CTP contacts are provided by residues 148-150 (DIE), 188-193 (KTKPTQ), and lysine 224. UTP is bound by residues 188-193 (KTKPTQ) and lysine 224. The Glutamine amidotransferase type-1 domain maps to 294-532 (KIAVVGKYIE…IKAAKNKKQN (239 aa)). Residue glycine 353 participates in L-glutamine binding. Residue cysteine 380 is the Nucleophile; for glutamine hydrolysis of the active site. Residues 381–384 (LGLH), glutamate 403, and arginine 460 contribute to the L-glutamine site. Residues histidine 505 and glutamate 507 contribute to the active site.

Belongs to the CTP synthase family. Homotetramer.

The enzyme catalyses UTP + L-glutamine + ATP + H2O = CTP + L-glutamate + ADP + phosphate + 2 H(+). It carries out the reaction L-glutamine + H2O = L-glutamate + NH4(+). The catalysed reaction is UTP + NH4(+) + ATP = CTP + ADP + phosphate + 2 H(+). The protein operates within pyrimidine metabolism; CTP biosynthesis via de novo pathway; CTP from UDP: step 2/2. With respect to regulation, allosterically activated by GTP, when glutamine is the substrate; GTP has no effect on the reaction when ammonia is the substrate. The allosteric effector GTP functions by stabilizing the protein conformation that binds the tetrahedral intermediate(s) formed during glutamine hydrolysis. Inhibited by the product CTP, via allosteric rather than competitive inhibition. Catalyzes the ATP-dependent amination of UTP to CTP with either L-glutamine or ammonia as the source of nitrogen. Regulates intracellular CTP levels through interactions with the four ribonucleotide triphosphates. The sequence is that of CTP synthase from Methanosphaera stadtmanae (strain ATCC 43021 / DSM 3091 / JCM 11832 / MCB-3).